The primary structure comprises 336 residues: Biotin synthase (336 aa).

A Radical SAM core domain is found at 54-281 (NAIQLSTLLS…KAMVRLSAGR (228 aa)). The [4Fe-4S] cluster site is built by Cys-69, Cys-73, and Cys-76. 4 residues coordinate [2Fe-2S] cluster: Cys-113, Cys-144, Cys-204, and Arg-276.

This sequence belongs to the radical SAM superfamily. Biotin synthase family. Homodimer. [4Fe-4S] cluster serves as cofactor. Requires [2Fe-2S] cluster as cofactor.

The catalysed reaction is (4R,5S)-dethiobiotin + (sulfur carrier)-SH + 2 reduced [2Fe-2S]-[ferredoxin] + 2 S-adenosyl-L-methionine = (sulfur carrier)-H + biotin + 2 5'-deoxyadenosine + 2 L-methionine + 2 oxidized [2Fe-2S]-[ferredoxin]. Its pathway is cofactor biosynthesis; biotin biosynthesis; biotin from 7,8-diaminononanoate: step 2/2. Its function is as follows. Catalyzes the conversion of dethiobiotin (DTB) to biotin by the insertion of a sulfur atom into dethiobiotin via a radical-based mechanism. This Burkholderia thailandensis (strain ATCC 700388 / DSM 13276 / CCUG 48851 / CIP 106301 / E264) protein is Biotin synthase.